We begin with the raw amino-acid sequence, 546 residues long: Adenine DNA glycosylase (546 aa).

Residues 19–51 (RAAVGSGHRKQAASQEGRQKHAKNNSQAKPSAC) are disordered. The active-site Proton donor/acceptor is glutamate 131. Cysteine 287, cysteine 294, cysteine 297, and cysteine 303 together coordinate [4Fe-4S] cluster. A Nudix hydrolase domain is found at 364–495 (PREESSATCV…AMKKVFRVYQ (132 aa)). The Nudix box signature appears at 404-426 (VTWEPSEQLQRKALLQELQRWAG).

This sequence belongs to the Nth/MutY family. It depends on [4Fe-4S] cluster as a cofactor.

Its subcellular location is the nucleus. The protein resides in the mitochondrion. The catalysed reaction is Hydrolyzes free adenine bases from 7,8-dihydro-8-oxoguanine:adenine mismatched double-stranded DNA, leaving an apurinic site.. Its function is as follows. Involved in oxidative DNA damage repair. Initiates repair of A*oxoG to C*G by removing the inappropriately paired adenine base from the DNA backbone. Possesses both adenine and 2-OH-A DNA glycosylase activities. The polypeptide is Adenine DNA glycosylase (MUTYH) (Homo sapiens (Human)).